The sequence spans 355 residues: MIMAGGTGGHVFPGLAVARAMQAEGWRVIWLGTRNGMEATLVPQHGFTIELINFSGLRGKKPVSYLLLPWRLAKACWQSFCILRRQRPQIVLGMGGYPALPGGIMAVLSGKPLLIHEQNRIAGLTNKILAKIASRILLAFPGTITDQAGKIQVTGNPVRTEIAQLPSPEVRYAKRAGKLNILVVGGSLGAQALNTVLPQALSMIPGNQRPFVTHQSGKVHLAALQQAYAEHGVTGNLVAFIEDMAVYYQNCDLVVCRAGALTIAELAAAGVASILVPYPYAVDDHQTANARFLSEHHAAVLWPQSELTANSLAQWLMTCTRTQLQTMAINARMLAMPEAAQSVVTVCQQLIETGP.

Residues 7-9 (TGG), asparagine 119, arginine 159, serine 187, isoleucine 241, and glutamine 286 contribute to the UDP-N-acetyl-alpha-D-glucosamine site.

It belongs to the glycosyltransferase 28 family. MurG subfamily.

Its subcellular location is the cell inner membrane. It catalyses the reaction di-trans,octa-cis-undecaprenyl diphospho-N-acetyl-alpha-D-muramoyl-L-alanyl-D-glutamyl-meso-2,6-diaminopimeloyl-D-alanyl-D-alanine + UDP-N-acetyl-alpha-D-glucosamine = di-trans,octa-cis-undecaprenyl diphospho-[N-acetyl-alpha-D-glucosaminyl-(1-&gt;4)]-N-acetyl-alpha-D-muramoyl-L-alanyl-D-glutamyl-meso-2,6-diaminopimeloyl-D-alanyl-D-alanine + UDP + H(+). The protein operates within cell wall biogenesis; peptidoglycan biosynthesis. Its function is as follows. Cell wall formation. Catalyzes the transfer of a GlcNAc subunit on undecaprenyl-pyrophosphoryl-MurNAc-pentapeptide (lipid intermediate I) to form undecaprenyl-pyrophosphoryl-MurNAc-(pentapeptide)GlcNAc (lipid intermediate II). The chain is UDP-N-acetylglucosamine--N-acetylmuramyl-(pentapeptide) pyrophosphoryl-undecaprenol N-acetylglucosamine transferase from Nitrosomonas eutropha (strain DSM 101675 / C91 / Nm57).